The primary structure comprises 113 residues: Crustacean hyperglycemic hormones B (113 aa).

The N-terminal stretch at 1–26 is a signal peptide; sequence MVAFRMMSMALLVVVASSWWASPVEA. 3 disulfide bridges follow: Cys-46-Cys-82, Cys-62-Cys-78, and Cys-65-Cys-91. Val-111 carries the post-translational modification Valine amide.

Belongs to the arthropod CHH/MIH/GIH/VIH hormone family. As to expression, expressed at a constant level in the eyestalks of juveniles and mature females. A low level expression is seen in the central nervous system.

It is found in the secreted. Its function is as follows. Hormone found in the sinus gland of isopods and decapods which controls the blood sugar level. Has a secretagogue action over the amylase released from the midgut gland. May act as a stress hormone and may be involved in the control of molting and reproduction. This Metapenaeus ensis (Greasyback shrimp) protein is Crustacean hyperglycemic hormones B.